A 202-amino-acid chain; its full sequence is Small ribosomal subunit protein uS4 (202 aa).

The segment at 15-42 (LGDLPGLTRKAAKRSYPPGQHGQARRKR) is disordered. The S4 RNA-binding domain maps to 90-152 (SRLDNICFRL…KGSKQLAEGN (63 aa)).

Belongs to the universal ribosomal protein uS4 family. As to quaternary structure, part of the 30S ribosomal subunit. Contacts protein S5. The interaction surface between S4 and S5 is involved in control of translational fidelity.

Its function is as follows. One of the primary rRNA binding proteins, it binds directly to 16S rRNA where it nucleates assembly of the body of the 30S subunit. In terms of biological role, with S5 and S12 plays an important role in translational accuracy. The protein is Small ribosomal subunit protein uS4 of Synechococcus sp. (strain CC9902).